The following is a 209-amino-acid chain: Probable GTP-binding protein EngB (209 aa).

The region spanning 12–203 (VSFEIIFVGR…RDRLHEMKRD (192 aa)) is the EngB-type G domain. Residues 20-27 (GRSNVGKS), 45-49 (GVTLR), 62-65 (DMPG), 142-145 (NKMD), and 179-181 (ISA) contribute to the GTP site. Residues Ser27 and Thr47 each contribute to the Mg(2+) site.

The protein belongs to the TRAFAC class TrmE-Era-EngA-EngB-Septin-like GTPase superfamily. EngB GTPase family. The cofactor is Mg(2+).

Necessary for normal cell division and for the maintenance of normal septation. This Methanosarcina barkeri (strain Fusaro / DSM 804) protein is Probable GTP-binding protein EngB.